A 78-amino-acid polypeptide reads, in one-letter code: UPF0291 protein Ldb1355 (78 aa).

The protein belongs to the UPF0291 family.

It localises to the cytoplasm. The chain is UPF0291 protein Ldb1355 from Lactobacillus delbrueckii subsp. bulgaricus (strain ATCC 11842 / DSM 20081 / BCRC 10696 / JCM 1002 / NBRC 13953 / NCIMB 11778 / NCTC 12712 / WDCM 00102 / Lb 14).